The chain runs to 721 residues: 1,4-alpha-glucan branching enzyme GlgB (721 aa).

Residue D400 is the Nucleophile of the active site. Residue E453 is the Proton donor of the active site.

It belongs to the glycosyl hydrolase 13 family. GlgB subfamily. Monomer.

The enzyme catalyses Transfers a segment of a (1-&gt;4)-alpha-D-glucan chain to a primary hydroxy group in a similar glucan chain.. It participates in glycan biosynthesis; glycogen biosynthesis. In terms of biological role, catalyzes the formation of the alpha-1,6-glucosidic linkages in glycogen by scission of a 1,4-alpha-linked oligosaccharide from growing alpha-1,4-glucan chains and the subsequent attachment of the oligosaccharide to the alpha-1,6 position. The chain is 1,4-alpha-glucan branching enzyme GlgB from Chlamydia abortus (strain DSM 27085 / S26/3) (Chlamydophila abortus).